We begin with the raw amino-acid sequence, 1685 residues long: Myomesin-1 (1685 aa).

Residues 33 to 80 form a disordered region; sequence KKRSAVYTQGSTAYSSRSSAAHRRESEAFRRASASSSQQQASQHALSS. 2 stretches are compositionally biased toward low complexity: residues 41–51 and 63–80; these read QGSTAYSSRSS and RASA…ALSS. Ser-113 bears the Phosphoserine mark. Positions 177 to 244 are disordered; the sequence is GITTSKQSTA…TSEKKSRKVV (68 aa). Low complexity predominate over residues 179 to 220; that stretch reads TTSKQSTASKQTTASKQSTASKQSTASKQSTASRQSTASRQS. 6 consecutive repeat copies span residues 182 to 187, 188 to 193, 194 to 199, 200 to 205, 206 to 211, and 212 to 217. Residues 182–217 form a 6 X 6 AA tandem repeats region; that stretch reads KQSTASKQTTASKQSTASKQSTASKQSTASRQSTAS. A compositionally biased stretch (polar residues) spans 221–233; it reads VVSKQATSALQQE. 2 Ig-like C2-type domains span residues 277-368 and 396-498; these read PEFI…ASVV and PYGY…AYVF. 3 consecutive Fibronectin type-III domains span residues 512–607, 640–734, and 741–834; these read APLD…ALDP, PPTD…VVGD, and APGK…VKAA. The segment at 840–938 is disordered; that stretch reads SPDVCPALSD…TDRAPPSPPC (99 aa). Over residues 874 to 888 the composition is skewed to low complexity; the sequence is LLGSKPNKPSLPSSS. Residues Ser-883 and Ser-887 each carry the phosphoserine modification. The segment covering 889–902 has biased composition (polar residues); sequence QNLGQTEVSKVSET. The segment covering 920–931 has biased composition (basic and acidic residues); sequence SKSDPLKKKTDR. 2 consecutive Fibronectin type-III domains span residues 933-1034 and 1041-1140; these read PPSP…CEEW and PPHS…TRPG. Ser-1054 is modified (phosphoserine). 3 Ig-like C2-type domains span residues 1132-1230, 1358-1444, and 1573-1662; these read PVVA…EELK, PHFV…LKLV, and RVLG…FTVS. Cysteines 1160 and 1210 form a disulfide.

As to quaternary structure, homodimer. Interacts with TTN/titin. Interacts with PNKD.

Its subcellular location is the cytoplasm. The protein resides in the myofibril. It is found in the sarcomere. The protein localises to the m line. Major component of the vertebrate myofibrillar M band. Binds myosin, titin, and light meromyosin. This binding is dose dependent. This chain is Myomesin-1 (MYOM1), found in Homo sapiens (Human).